The chain runs to 227 residues: Ion-translocating oxidoreductase complex subunit E (227 aa).

The next 5 helical transmembrane spans lie at 57 to 77 (LGLG…ISLF), 89 to 109 (IYVM…NAFA), 111 to 131 (PVYQ…IVIG), 146 to 166 (AFDG…LGAI), and 200 to 220 (GLLL…ILAV).

Belongs to the NqrDE/RnfAE family. As to quaternary structure, the complex is composed of six subunits: RnfA, RnfB, RnfC, RnfD, RnfE and RnfG.

The protein localises to the cell inner membrane. Functionally, part of a membrane-bound complex that couples electron transfer with translocation of ions across the membrane. The protein is Ion-translocating oxidoreductase complex subunit E of Haemophilus ducreyi (strain 35000HP / ATCC 700724).